A 684-amino-acid polypeptide reads, in one-letter code: Glycine--tRNA ligase beta subunit (684 aa).

This sequence belongs to the class-II aminoacyl-tRNA synthetase family. As to quaternary structure, tetramer of two alpha and two beta subunits.

The protein resides in the cytoplasm. The enzyme catalyses tRNA(Gly) + glycine + ATP = glycyl-tRNA(Gly) + AMP + diphosphate. In Pseudomonas savastanoi pv. phaseolicola (strain 1448A / Race 6) (Pseudomonas syringae pv. phaseolicola (strain 1448A / Race 6)), this protein is Glycine--tRNA ligase beta subunit.